Reading from the N-terminus, the 253-residue chain is Large ribosomal subunit protein uL1m (253 aa).

The N-terminal 81 residues, 1–81 (MSSLIALGKR…SIALKSNRRA (81 aa)), are a transit peptide targeting the mitochondrion.

Belongs to the universal ribosomal protein uL1 family. In terms of assembly, component of the mitochondrial large ribosomal subunit (mt-LSU). Mature yeast 74S mitochondrial ribosomes consist of a small (37S) and a large (54S) subunit. The 37S small subunit contains a 15S ribosomal RNA (15S mt-rRNA) and at least 32 different proteins. The 54S large subunit contains a 21S rRNA (21S mt-rRNA) and at least 45 different proteins.

The protein localises to the mitochondrion. In terms of biological role, component of the mitochondrial ribosome (mitoribosome), a dedicated translation machinery responsible for the synthesis of mitochondrial genome-encoded proteins, including at least some of the essential transmembrane subunits of the mitochondrial respiratory chain. The mitoribosomes are attached to the mitochondrial inner membrane and translation products are cotranslationally integrated into the membrane. The polypeptide is Large ribosomal subunit protein uL1m (mrpl1) (Schizosaccharomyces pombe (strain 972 / ATCC 24843) (Fission yeast)).